Here is a 365-residue protein sequence, read N- to C-terminus: Protein YIM1 (365 aa).

This sequence belongs to the YIM1 family.

The protein localises to the lipid droplet. The protein resides in the mitochondrion. The polypeptide is Protein YIM1 (YIM1) (Saccharomyces cerevisiae (strain ATCC 204508 / S288c) (Baker's yeast)).